We begin with the raw amino-acid sequence, 644 residues long: Arabinosyltransferase XEG113 (644 aa).

Over 1–17 (MVEGWRNGFRDATNSKP) the chain is Cytoplasmic. A helical; Signal-anchor for type II membrane protein membrane pass occupies residues 18–38 (LFVTIYATVIIGVLVSSFYVF). Topologically, residues 39–644 (SAIYSPTNGS…QTPEEDHPPL (606 aa)) are lumenal. N-linked (GlcNAc...) asparagine glycans are attached at residues Asn46 and Asn70. Residues 226–228 (DTD) carry the DXD motif motif. N-linked (GlcNAc...) asparagine glycans are attached at residues Asn446 and Asn542.

It belongs to the glycosyltransferase 77 family.

Its subcellular location is the golgi apparatus membrane. Its function is as follows. Plays a role in the arabinosylation of cell wall components. Involved in the arabinosylation of extensin proteins in root hair cells. Extensins are structural glycoproteins present in cell walls and its arabinosylation is important for cell elongation, root hair cell development, lateral root development and root hair tip growth. In Arabidopsis thaliana (Mouse-ear cress), this protein is Arabinosyltransferase XEG113.